The chain runs to 92 residues: Small ribosomal subunit protein uS19c (92 aa).

It belongs to the universal ribosomal protein uS19 family.

It localises to the plastid. The protein resides in the chloroplast. Functionally, protein S19 forms a complex with S13 that binds strongly to the 16S ribosomal RNA. The chain is Small ribosomal subunit protein uS19c from Nandina domestica (Heavenly bamboo).